The sequence spans 436 residues: Trigger factor (436 aa).

A PPIase FKBP-type domain is found at 161-246 (EDQLNIDFVG…VNTVSEPKLP (86 aa)).

The protein belongs to the FKBP-type PPIase family. Tig subfamily.

It is found in the cytoplasm. It carries out the reaction [protein]-peptidylproline (omega=180) = [protein]-peptidylproline (omega=0). Functionally, involved in protein export. Acts as a chaperone by maintaining the newly synthesized protein in an open conformation. Functions as a peptidyl-prolyl cis-trans isomerase. The sequence is that of Trigger factor from Pseudomonas fluorescens (strain Pf0-1).